The following is a 264-amino-acid chain: Protein GrpE (264 aa).

A compositionally biased stretch (basic and acidic residues) spans 36–49 (KVQSKKVSSDHSSS). A disordered region spans residues 36-59 (KVQSKKVSSDHSSSEDNASSDINS). Residues 50 to 59 (EDNASSDINS) are compositionally biased toward low complexity.

This sequence belongs to the GrpE family. As to quaternary structure, homodimer.

The protein resides in the cytoplasm. Its function is as follows. Participates actively in the response to hyperosmotic and heat shock by preventing the aggregation of stress-denatured proteins, in association with DnaK and GrpE. It is the nucleotide exchange factor for DnaK and may function as a thermosensor. Unfolded proteins bind initially to DnaJ; upon interaction with the DnaJ-bound protein, DnaK hydrolyzes its bound ATP, resulting in the formation of a stable complex. GrpE releases ADP from DnaK; ATP binding to DnaK triggers the release of the substrate protein, thus completing the reaction cycle. Several rounds of ATP-dependent interactions between DnaJ, DnaK and GrpE are required for fully efficient folding. In Peanut witches'-broom phytoplasma, this protein is Protein GrpE.